A 145-amino-acid polypeptide reads, in one-letter code: Transcriptional regulator SlyA (145 aa).

One can recognise an HTH marR-type domain in the interval 2 to 135 (ELPLGSDLAR…LALLVSRLEK (134 aa)). The H-T-H motif DNA-binding region spans 49–72 (QIQLAKAIGIEQPSLVRTLDQLEE).

It belongs to the SlyA family. In terms of assembly, homodimer.

Transcription regulator that can specifically activate or repress expression of target genes. Regulates genes involved in production of antibiotic and exoenzyme virulence determinants in the phytopathogen. Required for the expression of the virulence protein evf during Drosophila melanogaster infection. This chain is Transcriptional regulator SlyA, found in Pectobacterium carotovorum subsp. carotovorum (Erwinia carotovora subsp. carotovora).